Consider the following 456-residue polypeptide: Glycerol-3-phosphate acyltransferase 4 (456 aa).

A signal peptide spans 1-37; the sequence is MFLLLPFDSLIVNLLGISLTVLFTLLLVFIIVPAIFG. Transmembrane regions (helical) follow at residues 156–176 and 180–200; these read ISLR…CFLL and IALA…VGYL. Residue asparagine 247 is glycosylated (N-linked (GlcNAc...) asparagine). Positions 248–253 match the HXXXXD motif motif; sequence HTSPID. N-linked (GlcNAc...) asparagine glycosylation is found at asparagine 327, asparagine 328, and asparagine 362.

This sequence belongs to the 1-acyl-sn-glycerol-3-phosphate acyltransferase family.

The protein localises to the endoplasmic reticulum membrane. The enzyme catalyses sn-glycerol 3-phosphate + an acyl-CoA = a 1-acyl-sn-glycero-3-phosphate + CoA. It carries out the reaction dodecanoyl-CoA + sn-glycerol 3-phosphate = 1-dodecanoyl-sn-glycerol 3-phosphate + CoA. It catalyses the reaction sn-glycerol 3-phosphate + hexadecanoyl-CoA = 1-hexadecanoyl-sn-glycero-3-phosphate + CoA. The catalysed reaction is sn-glycerol 3-phosphate + octadecanoyl-CoA = 1-octadecanoyl-sn-glycero-3-phosphate + CoA. The enzyme catalyses sn-glycerol 3-phosphate + (9Z)-octadecenoyl-CoA = 1-(9Z-octadecenoyl)-sn-glycero-3-phosphate + CoA. It carries out the reaction (9Z,12Z)-octadecadienoyl-CoA + sn-glycerol 3-phosphate = 1-(9Z,12Z)-octadecadienoyl-sn-glycero-3-phosphate + CoA. It functions in the pathway phospholipid metabolism; CDP-diacylglycerol biosynthesis; CDP-diacylglycerol from sn-glycerol 3-phosphate: step 1/3. In terms of biological role, converts glycerol-3-phosphate to 1-acyl-sn-glycerol-3-phosphate (lysophosphatidic acid or LPA) by incorporating an acyl moiety at the sn-1 position of the glycerol backbone. Active against both saturated and unsaturated long-chain fatty acyl-CoAs. Protects cells against lipotoxicity. This chain is Glycerol-3-phosphate acyltransferase 4, found in Pongo abelii (Sumatran orangutan).